Consider the following 260-residue polypeptide: Cell division protein DivIB (260 aa).

The Cytoplasmic portion of the chain corresponds to 1 to 25 (MGAQDQNGKNHGGLFRDFQNRNVKK). Residues 26–46 (MWPLVMPITIILLVMIFMISS) form a helical membrane-spanning segment. Residues 47–260 (YSRVKKVTVS…STKTTSVQGY (214 aa)) lie on the Extracellular side of the membrane. The POTRA domain maps to 48-119 (SRVKKVTVSG…NQVKIKVEEY (72 aa)).

The protein belongs to the FtsQ/DivIB family. DivIB subfamily.

Its subcellular location is the cell membrane. Functionally, cell division protein that may be involved in stabilizing or promoting the assembly of the division complex. The polypeptide is Cell division protein DivIB (Lentilactobacillus buchneri (strain NRRL B-30929) (Lactobacillus buchneri)).